The sequence spans 256 residues: Thiazole synthase (256 aa).

Lys-95 functions as the Schiff-base intermediate with DXP in the catalytic mechanism. Residues Gly-156, 182-183, and 204-205 each bind 1-deoxy-D-xylulose 5-phosphate; these read AG and NT.

The protein belongs to the ThiG family. In terms of assembly, homotetramer. Forms heterodimers with either ThiH or ThiS.

The protein resides in the cytoplasm. The enzyme catalyses [ThiS sulfur-carrier protein]-C-terminal-Gly-aminoethanethioate + 2-iminoacetate + 1-deoxy-D-xylulose 5-phosphate = [ThiS sulfur-carrier protein]-C-terminal Gly-Gly + 2-[(2R,5Z)-2-carboxy-4-methylthiazol-5(2H)-ylidene]ethyl phosphate + 2 H2O + H(+). It participates in cofactor biosynthesis; thiamine diphosphate biosynthesis. In terms of biological role, catalyzes the rearrangement of 1-deoxy-D-xylulose 5-phosphate (DXP) to produce the thiazole phosphate moiety of thiamine. Sulfur is provided by the thiocarboxylate moiety of the carrier protein ThiS. In vitro, sulfur can be provided by H(2)S. This chain is Thiazole synthase, found in Citrobacter koseri (strain ATCC BAA-895 / CDC 4225-83 / SGSC4696).